Here is a 232-residue protein sequence, read N- to C-terminus: uncharacterized protein (232 aa).

This is an uncharacterized protein from Aedes vexans (Inland floodwater mosquito).